Consider the following 1405-residue polypeptide: DNA-directed RNA polymerase subunit beta' (1405 aa).

The Zn(2+) site is built by cysteine 70, cysteine 72, cysteine 85, and cysteine 88. Mg(2+) is bound by residues aspartate 460, aspartate 462, and aspartate 464. The Zn(2+) site is built by cysteine 815, cysteine 890, cysteine 897, and cysteine 900. Positions 1375–1405 (GLTDSEMETLSGKPAGAEPVAALADAGADEE) are disordered.

The protein belongs to the RNA polymerase beta' chain family. As to quaternary structure, the RNAP catalytic core consists of 2 alpha, 1 beta, 1 beta' and 1 omega subunit. When a sigma factor is associated with the core the holoenzyme is formed, which can initiate transcription. It depends on Mg(2+) as a cofactor. Requires Zn(2+) as cofactor.

It catalyses the reaction RNA(n) + a ribonucleoside 5'-triphosphate = RNA(n+1) + diphosphate. Its function is as follows. DNA-dependent RNA polymerase catalyzes the transcription of DNA into RNA using the four ribonucleoside triphosphates as substrates. The chain is DNA-directed RNA polymerase subunit beta' from Xanthomonas oryzae pv. oryzae (strain MAFF 311018).